Consider the following 313-residue polypeptide: Porphobilinogen deaminase (313 aa).

C242 carries the post-translational modification S-(dipyrrolylmethanemethyl)cysteine.

It belongs to the HMBS family. In terms of assembly, monomer. Dipyrromethane is required as a cofactor.

The enzyme catalyses 4 porphobilinogen + H2O = hydroxymethylbilane + 4 NH4(+). It functions in the pathway porphyrin-containing compound metabolism; protoporphyrin-IX biosynthesis; coproporphyrinogen-III from 5-aminolevulinate: step 2/4. In terms of biological role, tetrapolymerization of the monopyrrole PBG into the hydroxymethylbilane pre-uroporphyrinogen in several discrete steps. This Pseudomonas putida (strain ATCC 47054 / DSM 6125 / CFBP 8728 / NCIMB 11950 / KT2440) protein is Porphobilinogen deaminase.